Reading from the N-terminus, the 165-residue chain is Large ribosomal subunit protein uL11 (165 aa).

Ser38 carries the phosphoserine modification. Lys40 is covalently cross-linked (Glycyl lysine isopeptide (Lys-Gly) (interchain with G-Cter in SUMO2)). A Glycyl lysine isopeptide (Lys-Gly) (interchain with G-Cter in ubiquitin) cross-link involves residue Lys48. Residue Lys54 is modified to N6-acetyllysine. Lys83 participates in a covalent cross-link: Glycyl lysine isopeptide (Lys-Gly) (interchain with G-Cter in ubiquitin). Ser165 is subject to Phosphoserine.

It belongs to the universal ribosomal protein uL11 family. In terms of assembly, component of the large ribosomal subunit. Mature ribosomes consist of a small (40S) and a large (60S) subunit. The 40S subunit contains about 33 different proteins and 1 molecule of RNA (18S). The 60S subunit contains about 49 different proteins and 3 molecules of RNA (28S, 5.8S and 5S). In terms of processing, ubiquitinated at Lys-48 and Lys-83 by RNF14 and RNF25 in response to ribosome collisions (ribosome stalling).

It localises to the cytoplasm. Its function is as follows. Component of the large ribosomal subunit. The ribosome is a large ribonucleoprotein complex responsible for the synthesis of proteins in the cell. Binds directly to 26S ribosomal RNA. The chain is Large ribosomal subunit protein uL11 (Rpl12) from Mus musculus (Mouse).